Reading from the N-terminus, the 213-residue chain is DNA-directed RNA polymerase subunit alpha (213 aa).

Belongs to the RNA polymerase alpha chain family. As to quaternary structure, in plastids the minimal PEP RNA polymerase catalytic core is composed of four subunits: alpha, beta, beta', and beta''. When a (nuclear-encoded) sigma factor is associated with the core the holoenzyme is formed, which can initiate transcription.

The protein localises to the plastid. It localises to the chloroplast. It carries out the reaction RNA(n) + a ribonucleoside 5'-triphosphate = RNA(n+1) + diphosphate. Functionally, DNA-dependent RNA polymerase catalyzes the transcription of DNA into RNA using the four ribonucleoside triphosphates as substrates. This chain is DNA-directed RNA polymerase subunit alpha (rpoA), found in Euglena stellata.